The primary structure comprises 645 residues: Octopamine receptor Oamb (645 aa).

The Extracellular segment spans residues 1 to 25; sequence MNETECEDLIKSVKWTEPANLISLA. A glycan (N-linked (GlcNAc...) asparagine) is linked at asparagine 2. Residues 26-46 form a helical membrane-spanning segment; the sequence is VLEFINVLVIGGNCLVIAAVF. Topologically, residues 47–56 are cytoplasmic; the sequence is CSNKLRSVTN. The chain crosses the membrane as a helical span at residues 57–77; that stretch reads FFIVNLAVADLLVGLAVLPFS. The Extracellular segment spans residues 78–94; it reads ATWEVFKVWIFGDLWCR. A disulfide bond links cysteine 93 and cysteine 287. The chain crosses the membrane as a helical span at residues 95 to 115; that stretch reads IWLAVDVWMCTASILNLCAIS. Over 116–138 the chain is Cytoplasmic; the sequence is LDRYVAVTRPVTYPSIMSTKKAK. Residues 139-159 traverse the membrane as a helical segment; it reads SLIAGIWVLSFFICFPPLVGW. The Extracellular portion of the chain corresponds to 160 to 295; that stretch reads KDQKAVIQPT…KCELTNDRGY (136 aa). An N-linked (GlcNAc...) asparagine glycan is attached at asparagine 174. The segment at 190–212 is disordered; it reads QLGLDSIKDQGEASLPPSPPHIG. Residues 296–316 form a helical membrane-spanning segment; that stretch reads VLYSALGSFYIPMFVMLFFYW. Residues 317 to 520 lie on the Cytoplasmic side of the membrane; it reads RIYRAAVRTT…FRMETKAAKT (204 aa). 2 disordered regions span residues 358–386 and 479–500; these read GRGSNQQDSMHSNGSTQSTTTTLGTPSPE and RQSNTSEAGGSGHSRPANKKMG. A compositionally biased stretch (low complexity) spans 369–385; that stretch reads SNGSTQSTTTTLGTPSP. The chain crosses the membrane as a helical span at residues 521–541; sequence LAIIVGMFIFCWCPFFTMYII. At 542 to 551 the chain is on the extracellular side; that stretch reads RPFCQDCVDP. A helical transmembrane segment spans residues 552–572; it reads LLFSVLFWLGYCNSAVNPMIY. The Cytoplasmic portion of the chain corresponds to 573–645; that stretch reads ALFSKDFRFA…HHSEMSNDPR (73 aa). The disordered stretch occupies residues 621 to 645; it reads TPSAAAHSFGDESELHHSEMSNDPR. Residues 629 to 645 show a composition bias toward basic and acidic residues; sequence FGDESELHHSEMSNDPR.

This sequence belongs to the G-protein coupled receptor 1 family. Highly enriched in mushroom body neuropil and in the ellipsoid body (at protein level). Expressed in oviduct epithelium (at protein level). Expressed in the adult and larval brain, thoracic and abdominal ganglia, terminal cells of the larval tracheal system, muscle, mature eggs and reproductive system.

It localises to the cell membrane. In terms of biological role, receptor for octopamine (OA) which is a neurotransmitter, neurohormone and neuromodulator in invertebrates. Stimulates intracellular accumulation of cAMP and Ca(2+) following ligand binding. Required for ovulation. Following activation on mature follicle cells by OA, induces activity of the metalloprotease Mmp2 which leads to breakdown of the posterior follicle wall, resulting in ovulation. Ligand binding probably also leads to activation of CamKII which is also required for ovulation. Modulates sleep/wake behavior by acting in neurons of the pars intercerebralis to promote wakefulness. Plays a role in courtship conditioning where the courtship behavior of males rejected by already mated females is inhibited with further females. Required in the mushroom body for appetitive olfactory learning. Specifically conveys the short-term reinforcing effects of sweet taste. In insulin-producing cells of the brain, plays a role in inhibiting transcription of insulin-like peptide Ilp3. Also plays a role in social behavior by modulating male agression. This Drosophila melanogaster (Fruit fly) protein is Octopamine receptor Oamb.